The sequence spans 185 residues: Ribosome-recycling factor (185 aa).

Belongs to the RRF family.

Its subcellular location is the cytoplasm. Responsible for the release of ribosomes from messenger RNA at the termination of protein biosynthesis. May increase the efficiency of translation by recycling ribosomes from one round of translation to another. The protein is Ribosome-recycling factor of Shewanella halifaxensis (strain HAW-EB4).